The following is a 285-amino-acid chain: ATP phosphoribosyltransferase (285 aa).

The protein belongs to the ATP phosphoribosyltransferase family. Long subfamily. The cofactor is Mg(2+).

It localises to the cytoplasm. The catalysed reaction is 1-(5-phospho-beta-D-ribosyl)-ATP + diphosphate = 5-phospho-alpha-D-ribose 1-diphosphate + ATP. It functions in the pathway amino-acid biosynthesis; L-histidine biosynthesis; L-histidine from 5-phospho-alpha-D-ribose 1-diphosphate: step 1/9. Its activity is regulated as follows. Feedback inhibited by histidine. Its function is as follows. Catalyzes the condensation of ATP and 5-phosphoribose 1-diphosphate to form N'-(5'-phosphoribosyl)-ATP (PR-ATP). Has a crucial role in the pathway because the rate of histidine biosynthesis seems to be controlled primarily by regulation of HisG enzymatic activity. This is ATP phosphoribosyltransferase from Metallosphaera sedula (strain ATCC 51363 / DSM 5348 / JCM 9185 / NBRC 15509 / TH2).